Here is a 124-residue protein sequence, read N- to C-terminus: Tax1-binding protein 3 (124 aa).

The residue at position 2 (Ser2) is an N-acetylserine. The PDZ domain occupies 15–112; the sequence is RVEIHKLRQG…EVVRLLVTRQ (98 aa). Position 61 is a phosphoserine (Ser61).

In terms of assembly, interacts (via its PDZ domain) with GLS2. Interacts (via its PDZ domain) with RTKN (via the C-terminal region); this interaction facilitates Rho-mediated activation of the FOS serum response element (SRE). Interacts (via PDZ domain) with ARHGEF16. Interacts (via PDZ domain) with KCNJ4 (via C-terminus). Competes with LIN7A for KCNJ4 binding. Interacts (via its PDZ domain) with CTNNB1; this interaction inhibits the transcriptional activity of CTNNB1. Interacts with ADGRB2.

The protein resides in the cytoplasm. It is found in the nucleus. Its subcellular location is the cell membrane. In terms of biological role, may regulate a number of protein-protein interactions by competing for PDZ domain binding sites. Binds CTNNB1 and may thereby act as an inhibitor of the Wnt signaling pathway. Competes with LIN7A for KCNJ4 binding, and thereby promotes KCNJ4 internalization. May play a role in the Rho signaling pathway. The chain is Tax1-binding protein 3 from Mus musculus (Mouse).